The sequence spans 179 residues: Large ribosomal subunit protein uL5 (179 aa).

Belongs to the universal ribosomal protein uL5 family. Part of the 50S ribosomal subunit; part of the 5S rRNA/L5/L18/L25 subcomplex. Contacts the 5S rRNA and the P site tRNA. Forms a bridge to the 30S subunit in the 70S ribosome.

Functionally, this is one of the proteins that bind and probably mediate the attachment of the 5S RNA into the large ribosomal subunit, where it forms part of the central protuberance. In the 70S ribosome it contacts protein S13 of the 30S subunit (bridge B1b), connecting the 2 subunits; this bridge is implicated in subunit movement. Contacts the P site tRNA; the 5S rRNA and some of its associated proteins might help stabilize positioning of ribosome-bound tRNAs. The protein is Large ribosomal subunit protein uL5 of Microcystis aeruginosa (strain NIES-843 / IAM M-2473).